Here is a 145-residue protein sequence, read N- to C-terminus: Androgenic gland hormone (145 aa).

The N-terminal stretch at 1-21 (MKGLLFIVSLLCLTLHQRVWA) is a signal peptide. Cystine bridges form between Cys-33/Cys-122, Cys-42/Cys-59, Cys-44/Cys-140, and Cys-123/Cys-131. The propeptide at 68-112 (SADDEDYLFEEDEDDEFFHPRALSPPAAKSGDERLEDEVSFHSRS) is c peptide. An N-linked (GlcNAc...) asparagine glycan is attached at Asn-132.

As to expression, androgenic gland.

Its subcellular location is the secreted. Controls sex differentiation and the formation of male appendages, spermatogenesis, pigmentation, and male specific behavior. In Porcellio scaber (Common rough woodlouse), this protein is Androgenic gland hormone (AGH).